The chain runs to 155 residues: Phosphopantetheine adenylyltransferase (155 aa).

Belongs to the eukaryotic CoaD family.

It localises to the cytoplasm. It catalyses the reaction (R)-4'-phosphopantetheine + ATP + H(+) = 3'-dephospho-CoA + diphosphate. Its pathway is cofactor biosynthesis; coenzyme A biosynthesis. Reversibly transfers an adenylyl group from ATP to 4'-phosphopantetheine, yielding dephospho-CoA (dPCoA) and pyrophosphate. The chain is Phosphopantetheine adenylyltransferase from Pyrobaculum aerophilum (strain ATCC 51768 / DSM 7523 / JCM 9630 / CIP 104966 / NBRC 100827 / IM2).